The chain runs to 471 residues: Tryptophanase (471 aa).

Residues K5, K115, and K156 each carry the N6-acetyllysine modification. K270 carries the N6-(pyridoxal phosphate)lysine modification. K450 bears the N6-acetyllysine mark.

The protein belongs to the beta-eliminating lyase family. As to quaternary structure, homotetramer. The cofactor is pyridoxal 5'-phosphate.

It carries out the reaction L-tryptophan + H2O = indole + pyruvate + NH4(+). It functions in the pathway amino-acid degradation; L-tryptophan degradation via pyruvate pathway; indole and pyruvate from L-tryptophan: step 1/1. This chain is Tryptophanase, found in Escherichia coli O139:H28 (strain E24377A / ETEC).